The chain runs to 103 residues: Small ribosomal subunit protein uS10 (103 aa).

This sequence belongs to the universal ribosomal protein uS10 family. Part of the 30S ribosomal subunit.

Functionally, involved in the binding of tRNA to the ribosomes. The chain is Small ribosomal subunit protein uS10 from Azotobacter vinelandii (strain DJ / ATCC BAA-1303).